The sequence spans 230 residues: UPF0173 metal-dependent hydrolase SPO2976 (230 aa).

The protein belongs to the UPF0173 family.

The protein is UPF0173 metal-dependent hydrolase SPO2976 of Ruegeria pomeroyi (strain ATCC 700808 / DSM 15171 / DSS-3) (Silicibacter pomeroyi).